Reading from the N-terminus, the 366-residue chain is Ferredoxin--NADP reductase, leaf isozyme 2, chloroplastic (366 aa).

The N-terminal 48 residues, 1–48, are a transit peptide targeting the chloroplast; it reads MAAVNTVSSLPCSKAGAAVAGGAPRPSTCSVFYPPRCWSKRSSGNGVR. The 123-residue stretch at 87–209 folds into the FAD-binding FR-type domain; the sequence is KEPYTGRCLL…TGPVGKEMLM (123 aa). FAD-binding positions include 145 to 148, 166 to 168, Tyr172, and 183 to 185; these read RLYS, CVK, and VCS. NADP(+)-binding residues include Ser148 and Lys168. A disulfide bond links Cys184 and Cys189. Position 185 is a phosphoserine (Ser185). Thr216 bears the Phosphothreonine mark. Residue Thr224 coordinates FAD. NADP(+) contacts are provided by residues Thr224, 256–257, 286–287, Lys296, 325–326, and Glu364; these read VP, SR, and GL.

It belongs to the ferredoxin--NADP reductase type 1 family. In terms of assembly, heterodimer with LFNR1. Component of high molecular weight thylakoid LFNRs-containing protein complexes containing LIR1, LFNR1, LFNR2, TIC62 and TROL proteins. Interacts directly with LIR1 and TIC62; LIR1 increases the affinity of LFNR1 and LFNR2 for TIC62. FAD serves as cofactor. Post-translationally, may form interchain disulfide bonds with LIR1.

It is found in the plastid. Its subcellular location is the chloroplast stroma. It localises to the chloroplast thylakoid membrane. The enzyme catalyses 2 reduced [2Fe-2S]-[ferredoxin] + NADP(+) + H(+) = 2 oxidized [2Fe-2S]-[ferredoxin] + NADPH. It participates in energy metabolism; photosynthesis. Plays a key role in regulating the relative amounts of cyclic and non-cyclic electron flow to meet the demands of the plant for ATP and reducing power. This chain is Ferredoxin--NADP reductase, leaf isozyme 2, chloroplastic, found in Oryza sativa subsp. japonica (Rice).